The primary structure comprises 130 residues: Small ribosomal subunit protein uS8 (130 aa).

It belongs to the universal ribosomal protein uS8 family. Part of the 30S ribosomal subunit.

In terms of biological role, one of the primary rRNA binding proteins, it binds directly to 16S rRNA central domain where it helps coordinate assembly of the platform of the 30S subunit. This chain is Small ribosomal subunit protein uS8, found in Haloquadratum walsbyi (strain DSM 16790 / HBSQ001).